The sequence spans 347 residues: UDP-galactose/UDP-glucose transporter 5 (347 aa).

The next 8 membrane-spanning stretches (helical) occupy residues 17–37, 57–77, 116–136, 143–163, 177–197, 218–238, 247–267, and 293–313; these read LWKA…YGLL, LFLV…ALLA, VQTL…TLIM, FDYL…LFPA, TVWG…TSTF, ICSS…LPAV, CLFD…FISY, and CIWF…IVFG. The tract at residues 325-347 is disordered; sequence SEKPPAAQELPRDEEAQPLKGNP.

The protein belongs to the nucleotide-sugar transporter family. UDP-galactose:UMP antiporter (TC 2.A.7.11) subfamily.

The protein localises to the membrane. Its function is as follows. Sugar transporter involved in the transport of nucleotide-sugars from cytoplasm into the Golgi and/or the endoplasmic reticulum. The polypeptide is UDP-galactose/UDP-glucose transporter 5 (Arabidopsis thaliana (Mouse-ear cress)).